The chain runs to 148 residues: Deoxyuridine 5'-triphosphate nucleotidohydrolase (148 aa).

Residues 68–70 (RSG), Asn81, 85–87 (TID), and Lys95 contribute to the substrate site.

This sequence belongs to the dUTPase family. Mg(2+) serves as cofactor.

The catalysed reaction is dUTP + H2O = dUMP + diphosphate + H(+). The protein operates within pyrimidine metabolism; dUMP biosynthesis; dUMP from dCTP (dUTP route): step 2/2. In terms of biological role, this enzyme is involved in nucleotide metabolism: it produces dUMP, the immediate precursor of thymidine nucleotides and it decreases the intracellular concentration of dUTP so that uracil cannot be incorporated into DNA. The polypeptide is Deoxyuridine 5'-triphosphate nucleotidohydrolase (Rickettsia canadensis (strain McKiel)).